Consider the following 209-residue polypeptide: MVKIFQHPLINAKLTTMRSKETSYKDFRDNLNEIASLMVYETLRDYQTKKISITTPMNVKYEGETLDREIVIIPILRAGLGMLNGIMNLVPQARVGHIGMYRNEETNEVVEYFFKIPEVPHDSYIIIVDPMLATGSSACDAIAKLDKLGFNNIKLVCLVGVQQGIDKVTKQFPNVDIYLASKDEKLNEHNYILPGLGDAGDRIFGTKIK.

Residues Arg77, Arg102, and 129–137 (DPMLATGSS) each bind 5-phospho-alpha-D-ribose 1-diphosphate. Residues Ile192 and 197-199 (GDA) contribute to the uracil site. Asp198 lines the 5-phospho-alpha-D-ribose 1-diphosphate pocket.

Belongs to the UPRTase family. Mg(2+) is required as a cofactor.

The enzyme catalyses UMP + diphosphate = 5-phospho-alpha-D-ribose 1-diphosphate + uracil. It functions in the pathway pyrimidine metabolism; UMP biosynthesis via salvage pathway; UMP from uracil: step 1/1. Its activity is regulated as follows. Allosterically activated by GTP. Functionally, catalyzes the conversion of uracil and 5-phospho-alpha-D-ribose 1-diphosphate (PRPP) to UMP and diphosphate. In Metamycoplasma hominis (Mycoplasma hominis), this protein is Uracil phosphoribosyltransferase.